Here is a 603-residue protein sequence, read N- to C-terminus: Protein SHORT-ROOT 2 (603 aa).

2 disordered regions span residues 11 to 58 (HHHH…HSHS) and 106 to 140 (DFSSSSSSRQFHSGTGAPSSAPVPPPPSATTSSAG). The span at 31–44 (SYPSSRGSTSSPSS) shows a compositional bias: low complexity. A compositionally biased stretch (basic residues) spans 45 to 58 (HHTHNHTYYHHSHS). Positions 108–125 (SSSSSSRQFHSGTGAPSS) are enriched in low complexity. The region spanning 179–602 (AAPSSSGRWA…QPVVWASAWK (424 aa)) is the GRAS domain. The leucine repeat I (LRI) stretch occupies residues 186–249 (RWAAQLLMEC…LTTSGPRTLR (64 aa)). A VHIID region spans residues 268 to 354 (ALKFQELSPW…DTPHLSITTV (87 aa)). The VHIID motif lies at 318–322 (LHILD). Residues 370–406 (EIGQRLEKFARLMGVPFSFRAVHHSGDLADLDLAALD) are leucine repeat II (LRII). Positions 416 to 514 (LAVNCVNALR…ERAVGRAIVD (99 aa)) are PFYRE. An SAW region spans residues 517-602 (SCPASQSAER…QPVVWASAWK (86 aa)).

It belongs to the GRAS family. In terms of assembly, does not interact with SCR1.

It is found in the nucleus. In terms of biological role, putative transcription factor involved in asymmetric cell division. In Oryza sativa subsp. japonica (Rice), this protein is Protein SHORT-ROOT 2 (SHR2).